A 276-amino-acid chain; its full sequence is Putative ankyrin repeat protein R838 (276 aa).

ANK repeat units follow at residues 134 to 163 (DGDN…DPRS), 164 to 193 (DYDY…DISS), 195 to 223 (NHWP…DVRA), and 225 to 253 (NYNP…EIGS). The interval 254 to 276 (VSDDDTYDSDSSDYSEDDSESIN) is disordered. The segment covering 255-276 (SDDDTYDSDSSDYSEDDSESIN) has biased composition (acidic residues).

This chain is Putative ankyrin repeat protein R838, found in Acanthamoeba polyphaga (Amoeba).